The following is a 693-amino-acid chain: Elongation factor G (693 aa).

Residues 8–282 (KNTRNIGIMA…AVIDYLPSPL (275 aa)) form the tr-type G domain. GTP contacts are provided by residues 17–24 (AHIDAGKT), 81–85 (DTPGH), and 135–138 (NKMD).

The protein belongs to the TRAFAC class translation factor GTPase superfamily. Classic translation factor GTPase family. EF-G/EF-2 subfamily.

It is found in the cytoplasm. Catalyzes the GTP-dependent ribosomal translocation step during translation elongation. During this step, the ribosome changes from the pre-translocational (PRE) to the post-translocational (POST) state as the newly formed A-site-bound peptidyl-tRNA and P-site-bound deacylated tRNA move to the P and E sites, respectively. Catalyzes the coordinated movement of the two tRNA molecules, the mRNA and conformational changes in the ribosome. The protein is Elongation factor G of Staphylococcus epidermidis (strain ATCC 35984 / DSM 28319 / BCRC 17069 / CCUG 31568 / BM 3577 / RP62A).